The sequence spans 335 residues: MATIIYDDETTFDALKDRTIAVMGYGSQGHAHARNLHESGLNVIVGLRQGSSSWAKAESDGLKVMTVDDASRAADVIMILLPDEKQAAVYYSQIEPNLKAGDALVFAHGFNIHYNQIVPPKDVDVFMVAPKGPGHIVRRTYTEGIGVPGLIAVYQDATGKARDLALSYAKGIGATRAGVYETTFREETETDLFGEQVDLCGGLSALIKTAFEVLVEAGYQPEMAYFETCHEVKLIVDLIYEGGLERMWHSVSNTAEYGGMTVGPRVINEYSREAMYEALERIQNGEFAKEFVLEGMVNHPVLKAMERQEKEHQLEVVGKQIRANIPWLNKKIDDD.

A KARI N-terminal Rossmann domain is found at 1 to 182 (MATIIYDDET…GATRAGVYET (182 aa)). Residues 25–28 (YGSQ), Arg-48, Ser-51, Ser-53, and 83–86 (DEKQ) contribute to the NADP(+) site. His-108 is a catalytic residue. Gly-134 is an NADP(+) binding site. The region spanning 183–328 (TFREETETDL…KQIRANIPWL (146 aa)) is the KARI C-terminal knotted domain. Positions 191, 195, 227, and 231 each coordinate Mg(2+). Ser-252 is a substrate binding site.

The protein belongs to the ketol-acid reductoisomerase family. It depends on Mg(2+) as a cofactor.

The catalysed reaction is (2R)-2,3-dihydroxy-3-methylbutanoate + NADP(+) = (2S)-2-acetolactate + NADPH + H(+). It carries out the reaction (2R,3R)-2,3-dihydroxy-3-methylpentanoate + NADP(+) = (S)-2-ethyl-2-hydroxy-3-oxobutanoate + NADPH + H(+). The protein operates within amino-acid biosynthesis; L-isoleucine biosynthesis; L-isoleucine from 2-oxobutanoate: step 2/4. Its pathway is amino-acid biosynthesis; L-valine biosynthesis; L-valine from pyruvate: step 2/4. Its function is as follows. Involved in the biosynthesis of branched-chain amino acids (BCAA). Catalyzes an alkyl-migration followed by a ketol-acid reduction of (S)-2-acetolactate (S2AL) to yield (R)-2,3-dihydroxy-isovalerate. In the isomerase reaction, S2AL is rearranged via a Mg-dependent methyl migration to produce 3-hydroxy-3-methyl-2-ketobutyrate (HMKB). In the reductase reaction, this 2-ketoacid undergoes a metal-dependent reduction by NADPH to yield (R)-2,3-dihydroxy-isovalerate. This is Ketol-acid reductoisomerase (NADP(+)) from Methanosarcina mazei (strain ATCC BAA-159 / DSM 3647 / Goe1 / Go1 / JCM 11833 / OCM 88) (Methanosarcina frisia).